We begin with the raw amino-acid sequence, 392 residues long: Formate-dependent phosphoribosylglycinamide formyltransferase (392 aa).

N(1)-(5-phospho-beta-D-ribosyl)glycinamide is bound by residues 22 to 23 (EL) and Glu82. ATP-binding positions include Arg114, Lys155, 160 to 165 (SSGKGQ), 195 to 198 (EGVV), and Glu203. Positions 119 to 308 (RLAAEELQLP…EFALHVRAFL (190 aa)) constitute an ATP-grasp domain. 2 residues coordinate Mg(2+): Glu267 and Glu279. Residues Asp286, Lys355, and 362 to 363 (RR) each bind N(1)-(5-phospho-beta-D-ribosyl)glycinamide.

The protein belongs to the PurK/PurT family. In terms of assembly, homodimer.

It catalyses the reaction N(1)-(5-phospho-beta-D-ribosyl)glycinamide + formate + ATP = N(2)-formyl-N(1)-(5-phospho-beta-D-ribosyl)glycinamide + ADP + phosphate + H(+). The protein operates within purine metabolism; IMP biosynthesis via de novo pathway; N(2)-formyl-N(1)-(5-phospho-D-ribosyl)glycinamide from N(1)-(5-phospho-D-ribosyl)glycinamide (formate route): step 1/1. Involved in the de novo purine biosynthesis. Catalyzes the transfer of formate to 5-phospho-ribosyl-glycinamide (GAR), producing 5-phospho-ribosyl-N-formylglycinamide (FGAR). Formate is provided by PurU via hydrolysis of 10-formyl-tetrahydrofolate. The chain is Formate-dependent phosphoribosylglycinamide formyltransferase from Escherichia coli O1:K1 / APEC.